The chain runs to 390 residues: MRIVYFDCFAGIAGDMTVAALIELGVPIDYLREELAKLPLPLSAYSISVEQVQRKGIAATRFHVRAEEHQPHRHYTDIAAMIEQSTLSDRVKEMAQRVFFRLAEAEARVHGVEIGHVHFHEVGGVDSIVDIVGAAICLDYLGIGELHVSPLPLGSGFVETAHGRLPVPAPATAELLRGIPVHGDVGPGERVTPTGAAIVAALADSFGRAPAMRVVAVGCGAGSKDFDDMPNVVRLVMGEKTAILLKDEIYVIETHIDDMNPEILGFLMERLLACGALDVAFSPLQMKKNRPGSKLTILSSFDKLDELARLVLTESTAIGVRYYPVARMILSRAMEERDTSLGRVKVKVVSDEAQLLRIVPEFEECRRLAREKGLPLMEVYRIIERETAGQ.

It belongs to the LarC family.

This is Putative nickel insertion protein from Geotalea uraniireducens (strain Rf4) (Geobacter uraniireducens).